The following is a 216-amino-acid chain: Regulator of G-protein signaling 19 (216 aa).

Residues Met1–Arg19 are compositionally biased toward basic and acidic residues. The tract at residues Met1–Pro30 is disordered. Phosphoserine; by CK2 is present on Ser24. Residues Ser90 to Leu206 form the RGS domain. Phosphoserine is present on Ser97. At Ser151 the chain carries Phosphoserine; by MAPK1 and MAPK3. The interval Leu207 to Ala216 is interaction with GIPC.

Interacts with GIPC PDZ domain. Interacts with GNAO1. Post-translationally, fatty acylated. Heavily palmitoylated in the cysteine string motif. Phosphorylated, mainly on serine residues.

The protein resides in the membrane. In terms of biological role, inhibits signal transduction by increasing the GTPase activity of G protein alpha subunits thereby driving them into their inactive GDP-bound form. Binds to G-alpha subfamily 1 members, predominantly to G(i)-alpha-3. Activity on G(z)-alpha is inhibited by phosphorylation and palmitoylation of the G-protein. The protein is Regulator of G-protein signaling 19 (Rgs19) of Rattus norvegicus (Rat).